The primary structure comprises 561 residues: Reductase FVEG_12641 (561 aa).

The segment at 1–26 is disordered; it reads MGVQSTANLPKETVSHLDTAPTPKPG. The region spanning 52 to 189 is the MOSC domain; sequence QQHDGPVFCS…ICKGDTISLL (138 aa). The FAD-binding FR-type domain maps to 237-342; the sequence is SAPKTYTLVD…PGSNPGAMEN (106 aa). Residues 288–289, 305–307, 313–316, and threonine 362 each bind FMN; these read FE, GVS, and RGGS. A 2Fe-2S ferredoxin-type domain is found at 474 to 561; it reads FEVEVDEPDS…GIGRLRIEID (88 aa). Cysteine 512 serves as a coordination point for [2Fe-2S] cluster. Residue serine 514 coordinates FMN. [2Fe-2S] cluster contacts are provided by cysteine 517, cysteine 520, and cysteine 548.

It belongs to the PDR/VanB family. In terms of assembly, monomer. FMN is required as a cofactor.

In terms of biological role, reductase; part of the Fusarium detoxification of benzoxazolinone cluster 2 (FDB2) involved in the degradation of benzoxazolinones produced by the host plant. Maize, wheat, and rye produce the 2 benzoxazinone phytoanticipins 2,4-dihy-droxy-7-methoxy-1,4-benzoxazin-3-one (DIMBOA) and 2,4-dihydroxy-1,4-benzoxazin-3-one (DIBOA) that, due to their inherent instability once released, spontaneously degrade to the more stable corresponding benzoxazolinones, 6-methoxy-2-benzoxazolinone (MBOA) and 2-benzoxazolinone (BOA), respectively. The first step in the detoxification of benzoxazolinones involves the hydrolysis of the cyclic ester bond of benzoxazolinones by the FDB1 cluster gamma-lactamase MBL1 to aminophenols. MBL1 is able to convert BOA into 2-aminophenol (2-AP), as well as MBOA into 5-methoxy-2-aminophenol (2-AMP). The FDB2 cluster N-malonyltransferase FDB2/NAT1 then metabolizes aminophenols via N-malonylation to non-toxic malonamic acids. FDB2/NAT1 converts 2-AP into N-(2-hydroxyphenyl) malonamic acid (HPMA) and 2-AMP into N-(2-hydroxy-4-methoxyphenyl) malonamic acid (HMPMA). The duplicated dienlactone hydrolases DLH1 and DLH2 may provide redundant function for hydrolyzing the lactone moiety in the BOA molecule. The roles of the amidases an other enzymes encoded by the 2 FDB clusters have not been identified so far. The chain is Reductase FVEG_12641 from Gibberella moniliformis (strain M3125 / FGSC 7600) (Maize ear and stalk rot fungus).